Here is a 388-residue protein sequence, read N- to C-terminus: Oxytocin receptor (388 aa).

Positions 1–32 (MEGTPAANWSVELDLGSGVPPGEEGNRTAGPP) are disordered. Residues 1–38 (MEGTPAANWSVELDLGSGVPPGEEGNRTAGPPQRNEAL) are Extracellular-facing. N-linked (GlcNAc...) asparagine glycans are attached at residues asparagine 8 and asparagine 26. Residues 39–63 (ARVEVAVLCLILFLALSGNACVLLA) form a helical membrane-spanning segment. The Cytoplasmic portion of the chain corresponds to 64-74 (LRTTRHKHSRL). The chain crosses the membrane as a helical span at residues 75–97 (FFFMKHLSIADLVVAVFQVLPQL). Residues 98 to 113 (LWDITFRFYGPDLLCR) lie on the Extracellular side of the membrane. Cysteine 112 and cysteine 187 are joined by a disulfide. Residues 114–135 (LVKYLQVVGMFASTYLLLLMSL) form a helical membrane-spanning segment. At 136-154 (DRCLAICQPLRSLRRRTDR) the chain is on the cytoplasmic side. A helical transmembrane segment spans residues 155–175 (LAVLGTWLGCLVASAPQVHIF). Over 176–202 (SLREVADGVFDCWAVFIQPWGPKAYVT) the chain is Extracellular. The chain crosses the membrane as a helical span at residues 203 to 225 (WITLAVYIVPVIVLAACYGLISF). Residues 226 to 274 (KIWQNLRLKTAAAAAAAEGNDAAGGAGRAALARVSSVKLISKAKIRTVK) are Cytoplasmic-facing. The helical transmembrane segment at 275-293 (MTFIIVLAFIVCWTPFFFV) threads the bilayer. The Extracellular segment spans residues 294-308 (QMWSVWDVNAPKEAS). A helical transmembrane segment spans residues 309 to 331 (AFIIAMLLASLNSCCNPWIYMLF). Residues 332 to 388 (TGHLFHELVQRFFCCSARYLKGSRPGETSVSKKSNSSTFVLSRRSSSQRSCSQPSSA) lie on the Cytoplasmic side of the membrane. The segment at 354–388 (SRPGETSVSKKSNSSTFVLSRRSSSQRSCSQPSSA) is disordered. Phosphoserine occurs at positions 365 and 367. Positions 365-388 (SNSSTFVLSRRSSSQRSCSQPSSA) are enriched in low complexity.

Belongs to the G-protein coupled receptor 1 family. Vasopressin/oxytocin receptor subfamily.

The protein localises to the cell membrane. Functionally, receptor for oxytocin. The activity of this receptor is mediated by G proteins which activate a phosphatidylinositol-calcium second messenger system. The chain is Oxytocin receptor (Oxtr) from Rattus norvegicus (Rat).